An 83-amino-acid polypeptide reads, in one-letter code: NAD(P)H-quinone oxidoreductase subunit L (83 aa).

2 consecutive transmembrane segments (helical) span residues 15–35 and 53–73; these read LMVL…VPLL and LSAY…APFL.

Belongs to the complex I NdhL subunit family. In terms of assembly, NDH-1 can be composed of about 15 different subunits; different subcomplexes with different compositions have been identified which probably have different functions.

The protein resides in the cellular thylakoid membrane. The catalysed reaction is a plastoquinone + NADH + (n+1) H(+)(in) = a plastoquinol + NAD(+) + n H(+)(out). It carries out the reaction a plastoquinone + NADPH + (n+1) H(+)(in) = a plastoquinol + NADP(+) + n H(+)(out). NDH-1 shuttles electrons from an unknown electron donor, via FMN and iron-sulfur (Fe-S) centers, to quinones in the respiratory and/or the photosynthetic chain. The immediate electron acceptor for the enzyme in this species is believed to be plastoquinone. Couples the redox reaction to proton translocation, and thus conserves the redox energy in a proton gradient. Cyanobacterial NDH-1 also plays a role in inorganic carbon-concentration. The protein is NAD(P)H-quinone oxidoreductase subunit L of Prochlorococcus marinus (strain MIT 9303).